Consider the following 684-residue polypeptide: Methionine--tRNA ligase (684 aa).

Residues 14–24 (PYANGAIHLGH) carry the 'HIGH' region motif. Zn(2+) is bound by residues cysteine 145, cysteine 148, cysteine 158, and cysteine 161. The 'KMSKS' region signature appears at 330 to 334 (KMSKS). Lysine 333 lines the ATP pocket. One can recognise a tRNA-binding domain in the interval 582-684 (DFAKLDLRVA…CGIRPGMQVK (103 aa)).

It belongs to the class-I aminoacyl-tRNA synthetase family. MetG type 1 subfamily. As to quaternary structure, homodimer. The cofactor is Zn(2+).

It is found in the cytoplasm. It carries out the reaction tRNA(Met) + L-methionine + ATP = L-methionyl-tRNA(Met) + AMP + diphosphate. In terms of biological role, is required not only for elongation of protein synthesis but also for the initiation of all mRNA translation through initiator tRNA(fMet) aminoacylation. The protein is Methionine--tRNA ligase of Haemophilus ducreyi (strain 35000HP / ATCC 700724).